The primary structure comprises 121 residues: Cysteine-rich neurotrophic factor (121 aa).

The signal sequence occupies residues 1–18; that stretch reads MLLKLIVALSLTLTLASA. The N-linked (GlcNAc...) asparagine glycan is linked to Asn-57.

Its subcellular location is the secreted. Its function is as follows. Interacts with the p75 low-affinity neurotrophin receptor. Evokes neurite outgrowth and modulated calcium currents in pedal motor neurons. May be involved in target-derived trophic support for motor neurons. This Lymnaea stagnalis (Great pond snail) protein is Cysteine-rich neurotrophic factor.